We begin with the raw amino-acid sequence, 155 residues long: MMGLLQRVREARVEIDGETVGRIGPGLLVLVCAERGDTQAEADRLLDKLLRLRIFADEAGKMNRSVQDTGGGLLLVSQFTLAADTRGGNRPSFTQAAAPDDGRRLYDHFVARARALHPVVETGRFAAEMQVHLVNDGPVTIPLRIAPPGTVQNGP.

The Gly-cisPro motif, important for rejection of L-amino acids signature appears at 137 to 138 (GP).

Belongs to the DTD family. As to quaternary structure, homodimer.

It localises to the cytoplasm. It carries out the reaction glycyl-tRNA(Ala) + H2O = tRNA(Ala) + glycine + H(+). The enzyme catalyses a D-aminoacyl-tRNA + H2O = a tRNA + a D-alpha-amino acid + H(+). An aminoacyl-tRNA editing enzyme that deacylates mischarged D-aminoacyl-tRNAs. Also deacylates mischarged glycyl-tRNA(Ala), protecting cells against glycine mischarging by AlaRS. Acts via tRNA-based rather than protein-based catalysis; rejects L-amino acids rather than detecting D-amino acids in the active site. By recycling D-aminoacyl-tRNA to D-amino acids and free tRNA molecules, this enzyme counteracts the toxicity associated with the formation of D-aminoacyl-tRNA entities in vivo and helps enforce protein L-homochirality. The chain is D-aminoacyl-tRNA deacylase from Paracidovorax citrulli (strain AAC00-1) (Acidovorax citrulli).